Here is a 360-residue protein sequence, read N- to C-terminus: Deoxyhypusine hydroxylase (360 aa).

HEAT-like PBS-type repeat units follow at residues 56–82, 89–115, and 213–245; these read LKHE…ILQD, VRHE…YRSD, and ERYR…GLQD. Histidine 58, glutamate 59, histidine 91, and glutamate 92 together coordinate Fe cation. Fe cation contacts are provided by histidine 252, glutamate 253, histidine 285, and glutamate 286.

The protein belongs to the deoxyhypusine hydroxylase family. Requires Fe(2+) as cofactor.

The protein localises to the cytoplasm. The protein resides in the nucleus. It carries out the reaction [eIF5A protein]-deoxyhypusine + AH2 + O2 = [eIF5A protein]-hypusine + A + H2O. It participates in protein modification; eIF5A hypusination. Functionally, catalyzes the hydroxylation of the N(6)-(4-aminobutyl)-L-lysine intermediate to form hypusine, an essential post-translational modification only found in mature eIF-5A factor. The sequence is that of Deoxyhypusine hydroxylase from Mycosarcoma maydis (Corn smut fungus).